The primary structure comprises 154 residues: Large ribosomal subunit protein uL13 (154 aa).

The protein belongs to the universal ribosomal protein uL13 family. In terms of assembly, part of the 50S ribosomal subunit.

Functionally, this protein is one of the early assembly proteins of the 50S ribosomal subunit, although it is not seen to bind rRNA by itself. It is important during the early stages of 50S assembly. This Bartonella tribocorum (strain CIP 105476 / IBS 506) protein is Large ribosomal subunit protein uL13.